A 209-amino-acid chain; its full sequence is Uracil phosphoribosyltransferase (209 aa).

5-phospho-alpha-D-ribose 1-diphosphate contacts are provided by residues Arg79, Arg104, and 131–139; that span reads DPLLATGNS. Residues Ile194 and 199-201 contribute to the uracil site; that span reads GDA. Residue Asp200 coordinates 5-phospho-alpha-D-ribose 1-diphosphate.

This sequence belongs to the UPRTase family. Requires Mg(2+) as cofactor.

It carries out the reaction UMP + diphosphate = 5-phospho-alpha-D-ribose 1-diphosphate + uracil. It functions in the pathway pyrimidine metabolism; UMP biosynthesis via salvage pathway; UMP from uracil: step 1/1. Allosterically activated by GTP. Its function is as follows. Catalyzes the conversion of uracil and 5-phospho-alpha-D-ribose 1-diphosphate (PRPP) to UMP and diphosphate. The protein is Uracil phosphoribosyltransferase of Rhodococcus opacus (strain B4).